The chain runs to 466 residues: Asparagine--tRNA ligase (466 aa).

It belongs to the class-II aminoacyl-tRNA synthetase family. Homodimer.

It localises to the cytoplasm. It catalyses the reaction tRNA(Asn) + L-asparagine + ATP = L-asparaginyl-tRNA(Asn) + AMP + diphosphate + H(+). The protein is Asparagine--tRNA ligase of Escherichia coli O157:H7.